The chain runs to 510 residues: ATP-dependent zinc metalloprotease FtsH 2 (510 aa).

At 1–4 (MKKN) the chain is on the cytoplasmic side. Residues 5–25 (LHIIILALSIFINLLFIYIFI) traverse the membrane as a helical segment. Over 26–31 (SEVKPN) the chain is Extracellular. A helical transmembrane segment spans residues 32–52 (LNLNLSFILTAAVIVVTYLLF). The Cytoplasmic portion of the chain corresponds to 53–510 (KNKFSELMPV…LWEEENTLCV (458 aa)). An ATP-binding site is contributed by 124-131 (GPPGTGKT). His343 contributes to the Zn(2+) binding site. The active site involves Glu344. Residues His347 and Asp418 each coordinate Zn(2+).

It in the central section; belongs to the AAA ATPase family. In the C-terminal section; belongs to the peptidase M41 family. Homohexamer. Zn(2+) serves as cofactor.

The protein resides in the cell membrane. Acts as a processive, ATP-dependent zinc metallopeptidase for both cytoplasmic and membrane proteins. Plays a role in the quality control of integral membrane proteins. This Thermoanaerobacter sp. (strain X514) protein is ATP-dependent zinc metalloprotease FtsH 2.